Here is a 147-residue protein sequence, read N- to C-terminus: Hemoglobin subunit beta (147 aa).

Residues 3-147 (EWTDDERAII…VVSALGRQYH (145 aa)) enclose the Globin domain. Positions 64 and 93 each coordinate heme b.

This sequence belongs to the globin family. In terms of assembly, heterotetramer of two alpha chains and two beta chains. As to expression, red blood cells.

Involved in oxygen transport from gills to the various peripheral tissues. The protein is Hemoglobin subunit beta (hbb) of Melanogrammus aeglefinus (Haddock).